Consider the following 1382-residue polypeptide: Hepatocyte growth factor receptor (1382 aa).

The first 24 residues, 1–24 (MKASAVLAPGILALLFTLVQGNDG), serve as a signal peptide directing secretion. At 25-933 (ECQEALAKSE…VIVQPDQNFT (909 aa)) the chain is on the extracellular side. The Sema domain occupies 27–516 (QEALAKSEMN…TGKKITKIPL (490 aa)). 3 N-linked (GlcNAc...) asparagine glycosylation sites follow: Asn-45, Asn-100, and Asn-106. 4 disulfides stabilise this stretch: Cys-95–Cys-101, Cys-98–Cys-160, Cys-133–Cys-141, and Cys-173–Cys-176. N-linked (GlcNAc...) asparagine glycans are attached at residues Asn-203 and Asn-359. 2 cysteine pairs are disulfide-bonded: Cys-299–Cys-364 and Cys-386–Cys-398. 2 N-linked (GlcNAc...) asparagine glycosylation sites follow: Asn-400 and Asn-406. Intrachain disulfides connect Cys-521–Cys-539, Cys-527–Cys-562, Cys-530–Cys-546, and Cys-542–Cys-552. IPT/TIG domains follow at residues 564-656 (PAIH…FSYV), 658-740 (PVIT…FSYR), and 743-837 (PIVH…LIYV). Residue Thr-583 is glycosylated (O-linked (Man) threonine). Asn-608 and Asn-636 each carry an N-linked (GlcNAc...) asparagine glycan. Residues Thr-677 and Thr-762 are each glycosylated (O-linked (Man) threonine). 3 N-linked (GlcNAc...) asparagine glycosylation sites follow: Asn-786, Asn-880, and Asn-931. Residues 934–956 (GLIVGVVSISIILLLLLGLFLWM) traverse the membrane as a helical segment. The Cytoplasmic portion of the chain corresponds to 957–1382 (KKRKQIKDLG…QDNVNGEVDT (426 aa)). At Ser-967 the chain carries Phosphoserine. Phosphothreonine is present on Thr-978. A phosphoserine mark is found at Ser-991, Ser-998, and Ser-1001. Residue Tyr-1004 is modified to Phosphotyrosine. In terms of domain architecture, Protein kinase spans 1079–1346 (VHFNEVIGRG…RISAIFSTFI (268 aa)). ATP contacts are provided by residues 1085–1093 (IGRGHFGCV) and Lys-1111. The active-site Proton acceptor is Asp-1205. The interval 1213–1382 (LDEKFTVKVA…QDNVNGEVDT (170 aa)) is interaction with RANBP9. Tyr-1231 is subject to Phosphotyrosine. A phosphotyrosine; by autocatalysis mark is found at Tyr-1235 and Tyr-1236. Thr-1290 is modified (phosphothreonine). The tract at residues 1321 to 1360 (WHPKAEMRPSFSELVSRISAIFSTFIGEHYVHVNATYVNV) is interaction with MUC20. A phosphotyrosine; by autocatalysis mark is found at Tyr-1350 and Tyr-1357. Tyr-1366 is subject to Phosphotyrosine.

The protein belongs to the protein kinase superfamily. Tyr protein kinase family. Heterodimer made of an alpha chain (50 kDa) and a beta chain (145 kDa) which are disulfide linked. Binds PLXNB1. Interacts when phosphorylated with downstream effectors including STAT3, PIK3R1, SRC, PCLG1, GRB2 and GAB1. Interacts with SPSB1, SPSB2 and SPSB4. Interacts with INPP5D/SHIP1. When phosphorylated at Tyr-1357, interacts with INPPL1/SHIP2. Interacts with RANBP9 and RANBP10, as well as SPSB1, SPSB2, SPSB3 and SPSB4. SPSB1 binding occurs in the presence and in the absence of HGF, however HGF treatment has a positive effect on this interaction. Interacts with MUC20; prevents interaction with GRB2 and suppresses hepatocyte growth factor-induced cell proliferation. Interacts with GRB10. Interacts with PTPN1 and PTPN2. Interacts with HSP90AA1 and HSP90AB1; the interaction suppresses MET kinase activity. Interacts with tensin TNS3. Interacts (when phosphorylated) with tensin TNS4 (via SH2 domain); the interaction increases MET protein stability by inhibiting MET endocytosis and subsequent lysosomal degradation. Post-translationally, autophosphorylated in response to ligand binding on Tyr-1235 and Tyr-1236 in the kinase domain leading to further phosphorylation of Tyr-1350 and Tyr-1357 in the C-terminal multifunctional docking site. Dephosphorylated by PTPRJ at Tyr-1350 and Tyr-1366. Dephosphorylated by PTPN1 and PTPN2. Ubiquitinated. Ubiquitination by CBL regulates the receptor stability and activity through proteasomal degradation. In terms of processing, O-mannosylation of IPT/TIG domains by TMEM260 is required for protein maturation. O-mannosylated residues are composed of single mannose glycans that are not elongated or modified.

Its subcellular location is the membrane. It carries out the reaction L-tyrosyl-[protein] + ATP = O-phospho-L-tyrosyl-[protein] + ADP + H(+). In its inactive state, the C-terminal tail interacts with the catalytic domain and inhibits the kinase activity. Upon ligand binding, the C-terminal tail is displaced and becomes phosphorylated, thus increasing the kinase activity. Its function is as follows. Receptor tyrosine kinase that transduces signals from the extracellular matrix into the cytoplasm by binding to hepatocyte growth factor/HGF ligand. Regulates many physiological processes including proliferation, scattering, morphogenesis and survival. Ligand binding at the cell surface induces autophosphorylation of MET on its intracellular domain that provides docking sites for downstream signaling molecules. Following activation by ligand, interacts with the PI3-kinase subunit PIK3R1, PLCG1, SRC, GRB2, STAT3 or the adapter GAB1. Recruitment of these downstream effectors by MET leads to the activation of several signaling cascades including the RAS-ERK, PI3 kinase-AKT, or PLCgamma-PKC. The RAS-ERK activation is associated with the morphogenetic effects while PI3K/AKT coordinates prosurvival effects. During embryonic development, MET signaling plays a role in gastrulation, development and migration of muscles and neuronal precursors, angiogenesis and kidney formation. In adults, participates in wound healing as well as organ regeneration and tissue remodeling. Also promotes differentiation and proliferation of hematopoietic cells. The polypeptide is Hepatocyte growth factor receptor (MET) (Eulemur macaco macaco (Black lemur)).